We begin with the raw amino-acid sequence, 69 residues long: Conotoxin Gla-TxXI (69 aa).

The signal sequence occupies residues 1–25 (MVRVTSVGCFLLVIVSLNLVVLTNA). Intrachain disulfides connect Cys-26–Cys-40, Cys-33–Cys-45, Cys-39–Cys-49, and Cys-44–Cys-53. Glu-29 bears the 4-carboxyglutamate mark. Position 56 is a proline amide (Pro-56). Positions 60-69 (AKLLEFFRQR) are excised as a propeptide.

Contains 4 disulfide bonds. Expressed by the venom duct.

The protein localises to the secreted. The sequence is that of Conotoxin Gla-TxXI from Conus textile (Cloth-of-gold cone).